Consider the following 374-residue polypeptide: Flagellar P-ring protein (374 aa).

Residues 1 to 29 form the signal peptide; it reads MPGVGISRIVRIAVAALVALAPLMTPAHA.

This sequence belongs to the FlgI family. In terms of assembly, the basal body constitutes a major portion of the flagellar organelle and consists of four rings (L,P,S, and M) mounted on a central rod.

The protein localises to the periplasm. It localises to the bacterial flagellum basal body. In terms of biological role, assembles around the rod to form the L-ring and probably protects the motor/basal body from shearing forces during rotation. The protein is Flagellar P-ring protein of Nitrobacter hamburgensis (strain DSM 10229 / NCIMB 13809 / X14).